The following is an 831-amino-acid chain: Translation initiation factor IF-2 (831 aa).

A tr-type G domain is found at 329–499 (TRAPVVTVMG…LLISEMQDLK (171 aa)). The segment at 338-345 (GHVDHGKT) is G1. Position 338 to 345 (338 to 345 (GHVDHGKT)) interacts with GTP. A G2 region spans residues 363–367 (GITQH). Positions 385-388 (DTPG) are G3. Residues 385–389 (DTPGH) and 439–442 (NKID) contribute to the GTP site. The segment at 439 to 442 (NKID) is G4. Residues 475 to 477 (SAL) are G5.

It belongs to the TRAFAC class translation factor GTPase superfamily. Classic translation factor GTPase family. IF-2 subfamily.

It localises to the cytoplasm. In terms of biological role, one of the essential components for the initiation of protein synthesis. Protects formylmethionyl-tRNA from spontaneous hydrolysis and promotes its binding to the 30S ribosomal subunits. Also involved in the hydrolysis of GTP during the formation of the 70S ribosomal complex. The sequence is that of Translation initiation factor IF-2 (infB) from Rickettsia prowazekii (strain Madrid E).